The chain runs to 214 residues: Adenylate kinase (214 aa).

An ATP-binding site is contributed by 10–15 (GAGKGT). The NMP stretch occupies residues 30 to 59 (STGDMFRDHKARGTEIGKQVQAIMDAGGLV). AMP-binding positions include Thr31, Arg36, 57 to 59 (GLV), 85 to 88 (GYPR), and Gln92. The tract at residues 126–163 (GRRSCPRCGAVYHVSQNPPHRAGFCDRDDAALVQREDD) is LID. Arg127 lines the ATP pocket. Zn(2+) contacts are provided by Cys130 and Cys133. 136–137 (VY) provides a ligand contact to ATP. Cys150 and Asp153 together coordinate Zn(2+). AMP-binding residues include Arg160 and Arg171. Gly199 serves as a coordination point for ATP.

This sequence belongs to the adenylate kinase family. In terms of assembly, monomer.

The protein resides in the cytoplasm. The enzyme catalyses AMP + ATP = 2 ADP. The protein operates within purine metabolism; AMP biosynthesis via salvage pathway; AMP from ADP: step 1/1. Catalyzes the reversible transfer of the terminal phosphate group between ATP and AMP. Plays an important role in cellular energy homeostasis and in adenine nucleotide metabolism. This Anaeromyxobacter dehalogenans (strain 2CP-1 / ATCC BAA-258) protein is Adenylate kinase.